We begin with the raw amino-acid sequence, 463 residues long: ATP-dependent protease ATPase subunit HslU (463 aa).

ATP is bound by residues Val-21, 63 to 68 (GVGKTE), Asp-276, Glu-341, and Arg-413.

The protein belongs to the ClpX chaperone family. HslU subfamily. A double ring-shaped homohexamer of HslV is capped on each side by a ring-shaped HslU homohexamer. The assembly of the HslU/HslV complex is dependent on binding of ATP.

It localises to the cytoplasm. ATPase subunit of a proteasome-like degradation complex; this subunit has chaperone activity. The binding of ATP and its subsequent hydrolysis by HslU are essential for unfolding of protein substrates subsequently hydrolyzed by HslV. HslU recognizes the N-terminal part of its protein substrates and unfolds these before they are guided to HslV for hydrolysis. This Thermotoga petrophila (strain ATCC BAA-488 / DSM 13995 / JCM 10881 / RKU-1) protein is ATP-dependent protease ATPase subunit HslU.